Reading from the N-terminus, the 758-residue chain is Putative transcriptional regulatory protein YJL206C (758 aa).

Positions 47 to 73 (CIACRKRKVRCSGNIPCRLCQTNSYEC) form a DNA-binding region, zn(2)-C6 fungal-type.

Belongs to the ASG1 family.

It localises to the nucleus. The polypeptide is Putative transcriptional regulatory protein YJL206C (Saccharomyces cerevisiae (strain ATCC 204508 / S288c) (Baker's yeast)).